A 154-amino-acid polypeptide reads, in one-letter code: LRRKPGMDRSDLFNVNAGIVRNLVEQIAVTCPKACIGIITNPVNTTVAIAAEVLKKAGVYDKNKLFGVTTLDIIRSNTFVAELKGKQPQDINVPVIGGHSGVTILPLLSQVPGISFSEQEVADLTKRIQNAGTEVVEAKAGGGSATLSMGQVPG.

Substrate-binding residues include Arg3 and Arg9. NAD(+) is bound by residues Asn16 and 39 to 41 (ITN). Residues Asn41 and Arg75 each coordinate substrate. His99 functions as the Proton acceptor in the catalytic mechanism. Met149 serves as a coordination point for NAD(+).

Belongs to the LDH/MDH superfamily. MDH type 1 family. Homodimer.

The enzyme catalyses (S)-malate + NAD(+) = oxaloacetate + NADH + H(+). In terms of biological role, catalyzes the reversible oxidation of malate to oxaloacetate. This is Malate dehydrogenase (mdh) from Pectobacterium carotovorum subsp. carotovorum (Erwinia carotovora subsp. carotovora).